Reading from the N-terminus, the 988-residue chain is Echinoderm microtubule-associated protein-like 4 (988 aa).

Position 1 is an N-acetylmethionine (M1). The segment at 1 to 260 is microtubule-binding; it reads MDGFAGSLDD…IPSDVDNYDD (260 aa). Phosphoserine is present on residues S7, S13, S16, S61, and S79. Residues 14–63 adopt a coiled-coil conformation; sequence AASTSDVQDRLSALESRVQQQEDEITVLKAALADVLRRLAISEDHVASVK. Position 96 is a phosphothreonine (T96). Residues 106 to 194 are disordered; the sequence is TLSSAAKSGT…WENSDDSRNK (89 aa). Over residues 114–134 the composition is skewed to basic and acidic residues; it reads GTEKKKEKPQGQREKKEDSHS. Phosphoserine; by NEK7 is present on S134. Residues 137 to 155 show a composition bias toward low complexity; that stretch reads QSPQIRASPSPQPSSQPLQ. S144 bears the Phosphoserine; by NEK6 mark. S146 is modified (phosphoserine; by NEK7). Residues 156-168 show a composition bias toward polar residues; the sequence is INRQTPESKSSAP. Position 171 is a phosphoserine (S171). Residues 176-193 show a composition bias toward basic and acidic residues; it reads PTAEKSHNSWENSDDSRN. S200 carries the phosphoserine modification. Residue T201 is modified to Phosphothreonine. Phosphotyrosine is present on Y237. Residue T248 is modified to Phosphothreonine. WD repeat units lie at residues 270–308, 312–359, 367–407, 414–449, 456–495, 511–549, 554–590, 593–632, 636–673, 679–715, 722–761, 771–829, and 836–875; these read LKLEWVYGYRGKDCRANVYLLPTGEIVYFIASVVVLFNY, TQRH…VWDS, VIGL…VWDW, AEIKTTNEVVLAVEFHPTDANTIITCGKSHIFFWTW, RKQGIFGKYEKPKFVQCLAFLGNGDVLTGDSGGVMLIWSK, QINRQIKAHDGSVFTLCQMRNGMLLTGGGKDRKIILWDH, EREIEVPDQYGTIRAVAEGRAEQFLVGTSRNFILRGT, DGFQIEVQGHRDELWGLATHPFKDLLLTCAQDRQVCMWNS, RLEWTRLVDEPGHCADFHPSGTVVAIGTHSGRWFVLDA, VSIHTDGNEQLSVMRYSVDGTLLAVGSHDNFIYLYTV, YSRYGKCTGHSSYITHLDWSPDNKHIMSNSGDYEILYWDI, RSDC…LFQY, and APSHKYSAHSSHVTNVSFTHNDSHLISTGGKDMSIIQWKL. T620 bears the Phosphothreonine; by NEK6 and NEK7 mark. The disordered stretch occupies residues 887–988; it reads ITDASVTKTP…EEERGITPLC (102 aa). Positions 890–904 are enriched in polar residues; it reads ASVTKTPASSSETAR. Phosphoserine occurs at positions 906, 908, and 914. Positions 927–939 are enriched in polar residues; that stretch reads MGSSPTLVENSLE. Acidic residues predominate over residues 944-953; it reads PSEEQSEWGS.

The protein belongs to the WD repeat EMAP family. In terms of assembly, homotrimer; self-association is mediated by the N-terminal coiled coil. Interacts (via WD repeats) with NUDC. Interacts with alpha- and beta-tubulin during mitosis. Phosphorylated during mitosis. Phosphorylation at Ser-144 and Ser-146 promotes its dissociation from microtubules during mitosis which is required for efficient chromosome congression.

The protein localises to the cytoplasm. It is found in the cytoskeleton. Its subcellular location is the spindle. The protein resides in the microtubule organizing center. It localises to the midbody. Functionally, essential for the stability of microtubules (MTs). Essential for the formation of MTs. Required for the organization of the mitotic spindle and for the proper attachment of kinetochores to MTs. Promotes the recruitment of NUDC to the mitotic spindle for mitotic progression. This is Echinoderm microtubule-associated protein-like 4 (Eml4) from Mus musculus (Mouse).